A 465-amino-acid chain; its full sequence is MAFTPGKWIHMVGIAGAGMSGIARVLAQQGYKVSGSDLQVNDTTSRLEEIGVEIFKGHSSSNLKEGVDLLVTSSAVPQDNIELRLAREKKIPILKRGQMLAHLANAKKAVAVAGAHGKTTTTSMLYMVLANCGTEPSFIVGGELQGSELNAKLGRGDYFVVEADESDASFLDLRPYIALITNVEDDHLDYYKSVDNIRKAFRQFVEQIRPEGFAMLYGGDAFNRSLVKDLTLNKRLLFYGEDLSNDYYFLNWESIGLGSHFDVYKRELGFLGRFELAVPGKHNALNALAAIASALELGLEMEPIKSALKNFHGARRRFQIQGQKALVTVVDDYAHHPTEIRATIDAARNFHSGRVIVVYQPHRYSRTQLLGRQLGEALINADLAIITEVYSAGEEAIPGISGEVVCQAAQSIGCHSVYIPQREEIIPYLLQICQENDLIITMGAGDIWKLGLQLLEVLPESVLKV.

114–120 contacts ATP; sequence GAHGKTT.

The protein belongs to the MurCDEF family.

It is found in the cytoplasm. The catalysed reaction is UDP-N-acetyl-alpha-D-muramate + L-alanine + ATP = UDP-N-acetyl-alpha-D-muramoyl-L-alanine + ADP + phosphate + H(+). It functions in the pathway cell wall biogenesis; peptidoglycan biosynthesis. Functionally, cell wall formation. This Syntrophomonas wolfei subsp. wolfei (strain DSM 2245B / Goettingen) protein is UDP-N-acetylmuramate--L-alanine ligase.